The following is a 1423-amino-acid chain: ABC transporter G family member 40 (1423 aa).

Polar residues predominate over residues 1–19 (MEGTSFHQASNSMRRNSSV). The disordered stretch occupies residues 1-36 (MEGTSFHQASNSMRRNSSVWKKDSGREIFSRSSREE). Asn16 carries an N-linked (GlcNAc...) asparagine glycan. Basic and acidic residues predominate over residues 20 to 34 (WKKDSGREIFSRSSR). In terms of domain architecture, ABC transporter 1 spans 154–427 (LNTLHLVPNR…FETMGFKCPP (274 aa)). 187–194 (GPPSSGKT) is an ATP binding site. Asn376 carries N-linked (GlcNAc...) asparagine glycosylation. The ABC transmembrane type-2 1 domain maps to 505-718 (ELVKTSFSRE…GQNAILANEF (214 aa)). 6 consecutive transmembrane segments (helical) span residues 523-543 (FVYYFKFGQLLVMAFLTMTLF), 562-582 (ALFFILMMLMFNGMSELSMTI), 611-631 (IPISFMEAALTTFITYYVIGF), 643-663 (ILLVLMNQMASALFKMVAALG), 667-687 (IVANTFGAFAMLVFFALGGVV), and 696-716 (WWIWGYWISPIMYGQNAILAN). A glycan (N-linked (GlcNAc...) asparagine) is linked at Asn729. Residues 756–776 (GALLGFVVLFNFGFTLALTFL) traverse the membrane as a helical segment. Positions 825–1077 (ITFDNVVYSV…HLINYFESIQ (253 aa)) constitute an ABC transporter 2 domain. 870–877 (GVSGAGKT) contributes to the ATP binding site. Asn895 carries N-linked (GlcNAc...) asparagine glycosylation. Thr962 is subject to Phosphothreonine. The region spanning 1150 to 1364 (TQCMASLWKQ…TLYGLIASQF (215 aa)) is the ABC transmembrane type-2 2 domain. The next 6 membrane-spanning stretches (helical) occupy residues 1174–1194 (FLFTIGIALMFGTMFWDLGGK), 1207–1227 (SMYTAVLFLGLQNAASVQPVV), 1257–1277 (IPYVLVQAIVYGLIVYAMIGF), 1284–1304 (FFWYLFFMYGSFLTFTFYGMM), 1314–1334 (IASVVSSAFYGIWNLFSGFLI), and 1341–1361 (VWWEWYYWLCPVAWTLYGLIA). Asn1375 carries an N-linked (GlcNAc...) asparagine glycan. Residues 1395–1415 (VVAAMNVIFPLLFAVIFAIGI) traverse the membrane as a helical segment.

Belongs to the ABC transporter superfamily. ABCG family. PDR (TC 3.A.1.205) subfamily. In terms of assembly, interacts with LECRK91 and LECRK92. As to expression, mostly observed in inflorescence meristems relative to cauline leaves and developing siliques. Ubiquitous with higher levels in leaves, stems and flowers. Also present in primary and lateral roots. In seeds, mainly expressed in the embryo and, to a lesser extent, in the endosperm.

It is found in the cell membrane. The enzyme catalyses abscisate(out) + ATP + H2O = abscisate(in) + ADP + phosphate + H(+). Inhibited by glibenclamide, verapamil and vanadate (ABC transporters inhibitors). Its function is as follows. High affinity abscisic acid (ABA) transporter that mediates the import of ABA, with a preference for (+)-ABA, through the plasma membrane, especially in guard cells, and is involved in the intercellular and intracellular ABA signaling pathways leading, for example, to stomatal closure, thus conferring drought tolerance. Together with ABCG30, import into the embryo the ABA delivered from the endosperm via ABCG25 and ABCG31-mediated export to suppress radicle extension and subsequent embryonic growth. May be a general defense protein. Functions as a pump to exclude Pb(2+) ions and/or Pb(2+)-containing toxic compounds from the cytoplasm. Contributes to Pb(2+) ions resistance. Confers some resistance to the terpene sclareol. (Microbial infection) Involved in resistance response to the pathogenic oomycetes Phytophthora infestans and Phytophthora capsici. This chain is ABC transporter G family member 40, found in Arabidopsis thaliana (Mouse-ear cress).